We begin with the raw amino-acid sequence, 128 residues long: LIM domain-containing protein 2 (128 aa).

Met1 carries the N-acetylmethionine modification. The tract at residues 1 to 25 (MFQAAGAAQATPSHEAKGSSGNSTV) is disordered. In terms of domain architecture, LIM zinc-binding spans 39–99 (ETCAACQKTV…KPHFQQLFKS (61 aa)). Zn(2+) is bound by residues Cys41, Cys44, His62, Cys65, Cys68, Cys71, Cys89, and His92.

Interacts with ILK.

The protein resides in the cytoplasm. It is found in the nucleus. Its function is as follows. Acts as an activator of the protein-kinase ILK, thereby regulating cell motility. This is LIM domain-containing protein 2 (Limd2) from Rattus norvegicus (Rat).